The chain runs to 352 residues: 3-dehydroquinate synthase (352 aa).

Residues 60-65 (DGEGAK), 118-119 (TT), Lys-131, Lys-140, and 158-161 (FLET) contribute to the NAD(+) site. The Zn(2+) site is built by Glu-173, His-237, and His-253.

It belongs to the sugar phosphate cyclases superfamily. Dehydroquinate synthase family. The cofactor is NAD(+). Co(2+) is required as a cofactor. It depends on Zn(2+) as a cofactor.

It is found in the cytoplasm. The enzyme catalyses 7-phospho-2-dehydro-3-deoxy-D-arabino-heptonate = 3-dehydroquinate + phosphate. It participates in metabolic intermediate biosynthesis; chorismate biosynthesis; chorismate from D-erythrose 4-phosphate and phosphoenolpyruvate: step 2/7. In terms of biological role, catalyzes the conversion of 3-deoxy-D-arabino-heptulosonate 7-phosphate (DAHP) to dehydroquinate (DHQ). This is 3-dehydroquinate synthase from Sulfurisphaera tokodaii (strain DSM 16993 / JCM 10545 / NBRC 100140 / 7) (Sulfolobus tokodaii).